Here is a 1172-residue protein sequence, read N- to C-terminus: DNA-directed RNA polymerases IV and V subunit 2 (1172 aa).

Aspartate 786 contributes to the Mg(2+) binding site. The Zn(2+) site is built by cysteine 1108, cysteine 1111, cysteine 1133, and cysteine 1136. Residues cysteine 1108 to cysteine 1136 form a C4-type zinc finger.

It belongs to the RNA polymerase beta chain family. Component of the RNA polymerase IV and V complexes. Interacts with SSH1, NRPD1 and NRPE1. Mostly expressed in seedlings, flowers and roots, present ubiquitously, except in sperm cells.

The protein resides in the nucleus. The catalysed reaction is RNA(n) + a ribonucleoside 5'-triphosphate = RNA(n+1) + diphosphate. Its function is as follows. DNA-dependent RNA polymerase catalyzes the transcription of DNA into RNA using the four ribonucleoside triphosphates as substrates. Second largest component of RNA polymerases IV and V which mediate short-interfering RNAs (siRNA) accumulation and subsequent RNA-directed DNA methylation-dependent (RdDM) transcriptional gene silencing (TGS) of endogenous repeated sequences, including transposable elements. Proposed to contribute to the polymerase catalytic activity and forms the polymerase active center together with the largest subunit. Also required for full erasure of methylation when the RNA trigger is withdrawn. Required for intercellular RNA interference (RNAi) leading to systemic post-transcriptional gene silencing. Involved in the maintenance of post-transcriptional RNA silencing. During interphase, mediates siRNA-independent heterochromatin association and methylation into chromocenters and condensation and cytosine methylation at pericentromeric major repeats. Required for complete maintenance of the 35S promoter homology-dependent TGS in transgenic plants and for the initial establishment of DNA methylation. This chain is DNA-directed RNA polymerases IV and V subunit 2 (NRPD2), found in Arabidopsis thaliana (Mouse-ear cress).